The chain runs to 109 residues: Iron-sulfur assembly protein IscA-like 3, mitochondrial (109 aa).

A mitochondrion-targeting transit peptide spans 1 to 18 (MRKQVLALSDTAAARIRQ). Positions 37, 100, and 102 each coordinate Fe cation.

The protein belongs to the HesB/IscA family. Homodimer; may form tetramers and higher multimers. Fe cation serves as cofactor.

It is found in the mitochondrion. Functionally, involved in the assembly of mitochondrial iron-sulfur proteins. Probably involved in the binding of an intermediate of Fe/S cluster assembly. This Arabidopsis thaliana (Mouse-ear cress) protein is Iron-sulfur assembly protein IscA-like 3, mitochondrial.